The sequence spans 382 residues: Putative NADPH dehydrogenase C5H10.04 (382 aa).

Thr28 and His189 together coordinate FMN. His189 and Asn192 together coordinate substrate. FMN-binding residues include Arg242 and Arg334. Tyr361 is a binding site for substrate.

Belongs to the NADH:flavin oxidoreductase/NADH oxidase family. As to quaternary structure, homodimer or heterodimer. It depends on FMN as a cofactor.

It carries out the reaction A + NADPH + H(+) = AH2 + NADP(+). The polypeptide is Putative NADPH dehydrogenase C5H10.04 (Schizosaccharomyces pombe (strain 972 / ATCC 24843) (Fission yeast)).